A 153-amino-acid chain; its full sequence is Alpha-amylase type B isozyme (153 aa).

Substrate is bound by residues Lys19, 25 to 27, His38, Gln44, Lys123, and Trp150; that span reads GWW.

This sequence belongs to the glycosyl hydrolase 13 family. In terms of assembly, monomer. It depends on Ca(2+) as a cofactor.

The catalysed reaction is Endohydrolysis of (1-&gt;4)-alpha-D-glucosidic linkages in polysaccharides containing three or more (1-&gt;4)-alpha-linked D-glucose units.. In Hordeum vulgare (Barley), this protein is Alpha-amylase type B isozyme (AMY1.4).